Consider the following 521-residue polypeptide: Ribonuclease Y (521 aa).

The chain crosses the membrane as a helical span at residues 5 to 25; that stretch reads TVWILISILLATVGAVVGFFV. Residues 87-117 form a disordered region; sequence KQENRLMQKEENLDRKDETLDNRERQLEKKE. Positions 211–274 constitute a KH domain; it reads TVSVVNLPND…ETARIALDKL (64 aa). The 94-residue stretch at 337–430 folds into the HD domain; it reads VLKHSMEVAY…VAAADALSAA (94 aa).

The protein belongs to the RNase Y family.

It is found in the cell membrane. Its function is as follows. Endoribonuclease that initiates mRNA decay. This chain is Ribonuclease Y, found in Bacillus mycoides (strain KBAB4) (Bacillus weihenstephanensis).